The following is a 481-amino-acid chain: MQWETVIGLEIHAQLATQSKIFSGSPTAFGAAPNTQASLVDLAMPGTLPVLNEEAVRMACLFGLAIDARIDRQNVFARKNYFYPDLPKGYQTSQMDHPIVGKGHLDITLEDGTTRRIGITRAHLEEDAGKSLHEDFQGMSGIDLNRAGTPLLEIVSEPDIRSAKEAVAYVKAIHALVRYLGICDGNMAEGSLRCDCNVSVRPKGQAEFGTRAEIKNVNSFRFIEKAINHEIQRQIELIEDGGKVVQETRLYDPNKDETRSMRGKEEANDYRYFPCPDLLPVIIEPEYLAKLREQLPELPVQKRERFESQYGLSAYDASVLSASREMADYFEKVQEICGDAKLAANWVMVELGSLLNKDGLEIEQSPVSAEQLGGMILRIKDNTISGKIAKMVFEAMANGEGSADQIIEAKGLKQVTDSGAIEKMLDEVLTANAEQVEQYRAADEAKRGKMFGFFVGQAMKASKGKANPQQVNELLKKKLEA.

This sequence belongs to the GatB/GatE family. GatB subfamily. As to quaternary structure, heterotrimer of A, B and C subunits.

The catalysed reaction is L-glutamyl-tRNA(Gln) + L-glutamine + ATP + H2O = L-glutaminyl-tRNA(Gln) + L-glutamate + ADP + phosphate + H(+). It catalyses the reaction L-aspartyl-tRNA(Asn) + L-glutamine + ATP + H2O = L-asparaginyl-tRNA(Asn) + L-glutamate + ADP + phosphate + 2 H(+). Its function is as follows. Allows the formation of correctly charged Asn-tRNA(Asn) or Gln-tRNA(Gln) through the transamidation of misacylated Asp-tRNA(Asn) or Glu-tRNA(Gln) in organisms which lack either or both of asparaginyl-tRNA or glutaminyl-tRNA synthetases. The reaction takes place in the presence of glutamine and ATP through an activated phospho-Asp-tRNA(Asn) or phospho-Glu-tRNA(Gln). The polypeptide is Aspartyl/glutamyl-tRNA(Asn/Gln) amidotransferase subunit B (Pseudomonas paraeruginosa (strain DSM 24068 / PA7) (Pseudomonas aeruginosa (strain PA7))).